Here is a 212-residue protein sequence, read N- to C-terminus: MAQLLESVIDAAKGMKLAKLEGDAAFFWAPGGNTSVLVCDRPPQMRQRFRTRREQIKKDHPCDCKSCEQRDNLSIKFVAHEGEVAEQKVKRNVELAGVDVILVHRMLKNEVPVSEYLFMTDVVAQCLDESVRKLATPLTHDFEGIGETSTHYIDLATSDMPPAVPDHSFFGLLWADVKFEWHALPYLLGFKKACAGFRSLGRGATEEPAEMG.

This is an uncharacterized protein from Mycobacterium tuberculosis (strain ATCC 25618 / H37Rv).